A 167-amino-acid polypeptide reads, in one-letter code: MQFSIVVMAALASLASAQSMDGIPTCALQCLAQAVVTGGCEASDQACQCGPAREAITAAATPCLLSACTDAADLATAASVGNGMCDKYKMGGDDAAPSPSVNTPAAAAPYPTAPAPNGTVPIGTAAAPSPTANTNETTTVATGSAPQNVAGGLAGIFGLVVAAAFAL.

A signal peptide spans 1 to 17 (MQFSIVVMAALASLASA). The region spanning 18-112 (QSMDGIPTCA…TPAAAAPYPT (95 aa)) is the CFEM domain. 4 disulfides stabilise this stretch: Cys-26-Cys-68, Cys-30-Cys-63, Cys-40-Cys-47, and Cys-49-Cys-85. A heme-binding site is contributed by Asp-44. Residues Asn-117 and Asn-135 are each glycosylated (N-linked (GlcNAc...) asparagine). Gly-143 is lipidated: GPI-anchor amidated glycine. Positions 144 to 167 (SAPQNVAGGLAGIFGLVVAAAFAL) are cleaved as a propeptide — removed in mature form.

This sequence belongs to the RBT5 family.

Its subcellular location is the cell membrane. The protein localises to the secreted. The protein resides in the host nucleus. It is found in the host cell membrane. Its function is as follows. Appears to function during host infection, and may play a role in suppressing the host immune response. This chain is Effector CFEM8, found in Marssonina brunnea f. sp. multigermtubi (strain MB_m1) (Marssonina leaf spot fungus).